We begin with the raw amino-acid sequence, 415 residues long: 3-isopropylmalate dehydratase large subunit (415 aa).

Residues Cys295, Cys353, and Cys356 each coordinate [4Fe-4S] cluster.

Belongs to the aconitase/IPM isomerase family. LeuC type 2 subfamily. In terms of assembly, heterodimer of LeuC and LeuD. [4Fe-4S] cluster is required as a cofactor.

It carries out the reaction (2R,3S)-3-isopropylmalate = (2S)-2-isopropylmalate. The protein operates within amino-acid biosynthesis; L-leucine biosynthesis; L-leucine from 3-methyl-2-oxobutanoate: step 2/4. In terms of biological role, catalyzes the isomerization between 2-isopropylmalate and 3-isopropylmalate, via the formation of 2-isopropylmaleate. This Pyrobaculum arsenaticum (strain DSM 13514 / JCM 11321 / PZ6) protein is 3-isopropylmalate dehydratase large subunit.